The sequence spans 605 residues: Elongation factor 4 (605 aa).

The 184-residue stretch at 9-192 (SRTRNFCIIA…AIIARIPSPK (184 aa)) folds into the tr-type G domain. GTP-binding positions include 21 to 26 (DHGKST) and 139 to 142 (NKID).

This sequence belongs to the TRAFAC class translation factor GTPase superfamily. Classic translation factor GTPase family. LepA subfamily.

Its subcellular location is the cell inner membrane. The enzyme catalyses GTP + H2O = GDP + phosphate + H(+). In terms of biological role, required for accurate and efficient protein synthesis under certain stress conditions. May act as a fidelity factor of the translation reaction, by catalyzing a one-codon backward translocation of tRNAs on improperly translocated ribosomes. Back-translocation proceeds from a post-translocation (POST) complex to a pre-translocation (PRE) complex, thus giving elongation factor G a second chance to translocate the tRNAs correctly. Binds to ribosomes in a GTP-dependent manner. This is Elongation factor 4 from Chlorobium limicola (strain DSM 245 / NBRC 103803 / 6330).